The primary structure comprises 623 residues: Sulfite reductase [NADPH] flavoprotein alpha-component (623 aa).

The disordered stretch occupies residues 1–32; it reads MSFQKNEYSHKNVSEDNNGQGGNPPIASPLND. The region spanning 87-225 is the Flavodoxin-like domain; the sequence is LTIIFASQTG…AAEEWRKNAL (139 aa). Residues 93 to 98, 140 to 143, and 176 to 185 each bind FMN; these read SQTGNA, STNG, and LGDSSYEFFC. Residues 258 to 472 enclose the FAD-binding FR-type domain; sequence QNPYTATLLT…VEHNNNFKLP (215 aa). FAD-binding positions include Thr346, Ala380, 410-413, 428-430, Tyr434, and 443-446; these read RLYS, TVG, and GGAS. NADP(+) is bound by residues 543–544, 549–553, and Asp585; these read SR and KVYVQ. Tyr623 is a binding site for FAD.

It belongs to the NADPH-dependent sulphite reductase flavoprotein subunit CysJ family. This sequence in the N-terminal section; belongs to the flavodoxin family. In the C-terminal section; belongs to the flavoprotein pyridine nucleotide cytochrome reductase family. As to quaternary structure, alpha(8)-beta(8). The alpha component is a flavoprotein, the beta component is a hemoprotein. It depends on FAD as a cofactor. The cofactor is FMN.

It catalyses the reaction hydrogen sulfide + 3 NADP(+) + 3 H2O = sulfite + 3 NADPH + 4 H(+). It functions in the pathway sulfur metabolism; hydrogen sulfide biosynthesis; hydrogen sulfide from sulfite (NADPH route): step 1/1. Component of the sulfite reductase complex that catalyzes the 6-electron reduction of sulfite to sulfide. This is one of several activities required for the biosynthesis of L-cysteine from sulfate. The flavoprotein component catalyzes the electron flow from NADPH -&gt; FAD -&gt; FMN to the hemoprotein component. The protein is Sulfite reductase [NADPH] flavoprotein alpha-component of Vibrio parahaemolyticus serotype O3:K6 (strain RIMD 2210633).